The primary structure comprises 458 residues: Cysteine--tRNA ligase (458 aa).

Cys-29 lines the Zn(2+) pocket. Positions Met-31–His-41 match the 'HIGH' region motif. Zn(2+) contacts are provided by Cys-213, His-238, and Glu-242. Residues Lys-270–Ser-274 carry the 'KMSKS' region motif. Lys-273 lines the ATP pocket.

The protein belongs to the class-I aminoacyl-tRNA synthetase family. In terms of assembly, monomer. Zn(2+) serves as cofactor.

It is found in the cytoplasm. It catalyses the reaction tRNA(Cys) + L-cysteine + ATP = L-cysteinyl-tRNA(Cys) + AMP + diphosphate. This Acidovorax ebreus (strain TPSY) (Diaphorobacter sp. (strain TPSY)) protein is Cysteine--tRNA ligase.